A 288-amino-acid polypeptide reads, in one-letter code: ATP synthase gamma chain (288 aa).

Belongs to the ATPase gamma chain family. As to quaternary structure, F-type ATPases have 2 components, CF(1) - the catalytic core - and CF(0) - the membrane proton channel. CF(1) has five subunits: alpha(3), beta(3), gamma(1), delta(1), epsilon(1). CF(0) has three main subunits: a, b and c.

The protein resides in the cell inner membrane. In terms of biological role, produces ATP from ADP in the presence of a proton gradient across the membrane. The gamma chain is believed to be important in regulating ATPase activity and the flow of protons through the CF(0) complex. This is ATP synthase gamma chain from Blochmanniella floridana.